Reading from the N-terminus, the 428-residue chain is MLKSVIENVHALEIFDSRGNPTVEVHVTLSNGVVGKAEVPSGASTGENEAVELRDGGSRLGGKGVSKAVNNVNTEINDALKGMDPYDQAKIDQTMIDLDGTPNKGRLGANAILGVSMATAVAAANDNHQPLYRYLGGIDLEMPQTFHNVINGGEHADNGIDIQEFMITPIAKTSFRDGFEKIVNVYHTLKKVLEDMGYETGLGDEGGFAPNMKNSEEALKALHESIIKAGYKPGEDIGIACDCAASYFYNKEDGKYHLEGKVLNDEELADYYDKLLDEFPELMSMEDPYDENDVDGMVKFTKSHKDRIQIVLDDFICTNPALLKKAIKEGAGNASLIKLNQIGTVTETLETIRMSRKNGYNTMISHRSGETGDTFIADLAVAINGGQLKTGAPARSERVEKYNRLLEIEEELGKGERLAFFPDDIDHD.

Gln163 is a (2R)-2-phosphoglycerate binding site. The active-site Proton donor is Glu205. The Mg(2+) site is built by Asp242, Glu286, and Asp313. Positions 338, 367, 368, and 389 each coordinate (2R)-2-phosphoglycerate. Lys338 (proton acceptor) is an active-site residue.

Belongs to the enolase family. Requires Mg(2+) as cofactor.

It localises to the cytoplasm. Its subcellular location is the secreted. It is found in the cell surface. It carries out the reaction (2R)-2-phosphoglycerate = phosphoenolpyruvate + H2O. The protein operates within carbohydrate degradation; glycolysis; pyruvate from D-glyceraldehyde 3-phosphate: step 4/5. Its function is as follows. Catalyzes the reversible conversion of 2-phosphoglycerate (2-PG) into phosphoenolpyruvate (PEP). It is essential for the degradation of carbohydrates via glycolysis. The polypeptide is Enolase (Lactobacillus helveticus (strain DPC 4571)).